The sequence spans 452 residues: Bifunctional protein GlmU (452 aa).

The pyrophosphorylase stretch occupies residues 1–233 (MTDRPFAALI…AWEVAGVNSR (233 aa)). UDP-N-acetyl-alpha-D-glucosamine is bound by residues 11-14 (LAAG), Lys-25, Gln-76, 81-82 (GT), 104-106 (YGD), Gly-144, Glu-159, Asn-174, and Asn-231. Residue Asp-106 participates in Mg(2+) binding. A Mg(2+)-binding site is contributed by Asn-231. Residues 234-254 (AELAAVEAEWQRRRRLAAMAD) are linker. The tract at residues 255 to 452 (GATLIAPETV…AMKIKKAARK (198 aa)) is N-acetyltransferase. UDP-N-acetyl-alpha-D-glucosamine is bound by residues Arg-320 and Lys-338. His-350 functions as the Proton acceptor in the catalytic mechanism. Positions 353 and 364 each coordinate UDP-N-acetyl-alpha-D-glucosamine. Acetyl-CoA contacts are provided by residues Ala-367, 373 to 374 (NY), Ser-392, Ala-410, and Arg-427.

This sequence in the N-terminal section; belongs to the N-acetylglucosamine-1-phosphate uridyltransferase family. The protein in the C-terminal section; belongs to the transferase hexapeptide repeat family. In terms of assembly, homotrimer. Requires Mg(2+) as cofactor.

Its subcellular location is the cytoplasm. It carries out the reaction alpha-D-glucosamine 1-phosphate + acetyl-CoA = N-acetyl-alpha-D-glucosamine 1-phosphate + CoA + H(+). The enzyme catalyses N-acetyl-alpha-D-glucosamine 1-phosphate + UTP + H(+) = UDP-N-acetyl-alpha-D-glucosamine + diphosphate. It participates in nucleotide-sugar biosynthesis; UDP-N-acetyl-alpha-D-glucosamine biosynthesis; N-acetyl-alpha-D-glucosamine 1-phosphate from alpha-D-glucosamine 6-phosphate (route II): step 2/2. It functions in the pathway nucleotide-sugar biosynthesis; UDP-N-acetyl-alpha-D-glucosamine biosynthesis; UDP-N-acetyl-alpha-D-glucosamine from N-acetyl-alpha-D-glucosamine 1-phosphate: step 1/1. The protein operates within bacterial outer membrane biogenesis; LPS lipid A biosynthesis. Its function is as follows. Catalyzes the last two sequential reactions in the de novo biosynthetic pathway for UDP-N-acetylglucosamine (UDP-GlcNAc). The C-terminal domain catalyzes the transfer of acetyl group from acetyl coenzyme A to glucosamine-1-phosphate (GlcN-1-P) to produce N-acetylglucosamine-1-phosphate (GlcNAc-1-P), which is converted into UDP-GlcNAc by the transfer of uridine 5-monophosphate (from uridine 5-triphosphate), a reaction catalyzed by the N-terminal domain. This Rhizorhabdus wittichii (strain DSM 6014 / CCUG 31198 / JCM 15750 / NBRC 105917 / EY 4224 / RW1) (Sphingomonas wittichii) protein is Bifunctional protein GlmU.